A 433-amino-acid polypeptide reads, in one-letter code: Nuclear hormone receptor family member nhr-98 (433 aa).

Residues 41 to 116 (SKKCQICENP…FGMTIDNFQF (76 aa)) constitute a DNA-binding region (nuclear receptor). 2 consecutive NR C4-type zinc fingers follow at residues 44-64 (CQICENPAHGKHFGAVTCRAC) and 80-104 (CKTENKCSFRKNGYFSCKKCRMQRC). In terms of domain architecture, NR LBD spans 177–433 (ETPYQVSNVL…CSHPGIFLNA (257 aa)).

It belongs to the nuclear hormone receptor family.

It is found in the nucleus. Functionally, orphan nuclear receptor. This Caenorhabditis elegans protein is Nuclear hormone receptor family member nhr-98 (nhr-98).